The following is a 379-amino-acid chain: RIB43A-like with coiled-coils protein 1 (379 aa).

Coiled coils occupy residues glutamate 43–leucine 111 and isoleucine 285–arginine 337.

This sequence belongs to the RIB43A family. As to quaternary structure, microtubule inner protein component of sperm flagellar doublet microtubules.

Its subcellular location is the cytoplasm. It is found in the cytoskeleton. It localises to the flagellum axoneme. This is RIB43A-like with coiled-coils protein 1 (RIBC1) from Bos taurus (Bovine).